The primary structure comprises 415 residues: Histidine--tRNA ligase (415 aa).

It belongs to the class-II aminoacyl-tRNA synthetase family. Homodimer.

It is found in the cytoplasm. The catalysed reaction is tRNA(His) + L-histidine + ATP = L-histidyl-tRNA(His) + AMP + diphosphate + H(+). The polypeptide is Histidine--tRNA ligase (Rhodospirillum rubrum (strain ATCC 11170 / ATH 1.1.1 / DSM 467 / LMG 4362 / NCIMB 8255 / S1)).